The primary structure comprises 37 residues: Cytochrome b6-f complex subunit 5 (37 aa).

The chain crosses the membrane as a helical span at residues 5–25 (LLSGIILGLIPVTLSGLLVAA).

It belongs to the PetG family. The 4 large subunits of the cytochrome b6-f complex are cytochrome b6, subunit IV (17 kDa polypeptide, PetD), cytochrome f and the Rieske protein, while the 4 small subunits are PetG, PetL, PetM and PetN. The complex functions as a dimer.

Its subcellular location is the plastid. It is found in the chloroplast thylakoid membrane. Component of the cytochrome b6-f complex, which mediates electron transfer between photosystem II (PSII) and photosystem I (PSI), cyclic electron flow around PSI, and state transitions. PetG is required for either the stability or assembly of the cytochrome b6-f complex. The chain is Cytochrome b6-f complex subunit 5 from Porphyra purpurea (Red seaweed).